The chain runs to 77 residues: Large ribosomal subunit protein bL28 (77 aa).

Belongs to the bacterial ribosomal protein bL28 family.

In Ralstonia pickettii (strain 12J), this protein is Large ribosomal subunit protein bL28.